Here is a 90-residue protein sequence, read N- to C-terminus: Small ribosomal subunit protein uS15 (90 aa).

This sequence belongs to the universal ribosomal protein uS15 family. Part of the 30S ribosomal subunit. Forms a bridge to the 50S subunit in the 70S ribosome, contacting the 23S rRNA.

Functionally, one of the primary rRNA binding proteins, it binds directly to 16S rRNA where it helps nucleate assembly of the platform of the 30S subunit by binding and bridging several RNA helices of the 16S rRNA. Its function is as follows. Forms an intersubunit bridge (bridge B4) with the 23S rRNA of the 50S subunit in the ribosome. The polypeptide is Small ribosomal subunit protein uS15 (Paraburkholderia xenovorans (strain LB400)).